Here is a 571-residue protein sequence, read N- to C-terminus: Zinc metalloproteinase nas-15 (571 aa).

Positions 1-15 (MREYVLIFLVAPVFA) are cleaved as a signal peptide. Asn-92 carries N-linked (GlcNAc...) asparagine glycosylation. The region spanning 114 to 307 (NAIKNRLQLW…FKINTLYGCP (194 aa)) is the Peptidase M12A domain. Disulfide bonds link Cys-156/Cys-306, Cys-178/Cys-197, Cys-354/Cys-388, Cys-361/Cys-381, and Cys-370/Cys-385. His-205 contributes to the Zn(2+) binding site. Glu-206 is a catalytic residue. The Zn(2+) site is built by His-209 and His-215. The ShKT 1 domain occupies 354 to 388 (CRNLRGDCDDLAKQGWCIRNPGWMRANCPISCGMC). The span at 407–420 (TTTARPQKPVTQPI) shows a compositional bias: low complexity. Residues 407–426 (TTTARPQKPVTQPIQPLPPV) are disordered. 3 disulfide bridges follow: Cys-437-Cys-471, Cys-444-Cys-464, and Cys-453-Cys-468. The 35-residue stretch at 437–471 (CEDLRVDCLVLVSQRYCKISQNFMKSYCAKSCGFC) folds into the ShKT 2 domain. The segment at 500-530 (IRSRSPAPPVSTTTKAAPTTSTTSAAPYSPT) is disordered. The span at 509 to 527 (VSTTTKAAPTTSTTSAAPY) shows a compositional bias: low complexity. Intrachain disulfides connect Cys-536-Cys-571, Cys-543-Cys-564, and Cys-552-Cys-568. Residues 536–571 (CSDRKHFCSHWKSAGFCEGIFMNYMKKNCPASCGLC) form the ShKT 3 domain.

Requires Zn(2+) as cofactor. As to expression, expressed in pharyngeal marginal cells and muscles.

It localises to the secreted. Functionally, metalloprotease. This is Zinc metalloproteinase nas-15 (nas-15) from Caenorhabditis elegans.